The primary structure comprises 116 residues: Iron-sulfur cluster insertion protein ErpA (116 aa).

C44, C108, and C110 together coordinate iron-sulfur cluster.

It belongs to the HesB/IscA family. Homodimer. Requires iron-sulfur cluster as cofactor.

Its function is as follows. Required for insertion of 4Fe-4S clusters for at least IspG. This is Iron-sulfur cluster insertion protein ErpA from Shewanella sp. (strain ANA-3).